The following is a 650-amino-acid chain: Putative F-box protein R757 (650 aa).

Residues 7–53 enclose the F-box domain; that stretch reads FSVMESLPTELAYHVLSFIDFNSVVTYRLCSQESNNFIKSMLVFFPI.

The sequence is that of Putative F-box protein R757 from Acanthamoeba polyphaga mimivirus (APMV).